Consider the following 504-residue polypeptide: Syntaphilin (504 aa).

Residues 1–74 (MAMSLQGSRR…HGIKPPTPEQ (74 aa)) form a disordered region. Low complexity-rich tracts occupy residues 7–26 (GSRR…VSVR) and 33–49 (SLSS…SDSS). A coiled-coil region spans residues 79 to 161 (LQQKEVCIRH…VKNNLIDKDK (83 aa)). Residues 191–244 (VAKEEGTGESAGGSPARSLTRSSTYTKLSDPAVCGDRQAGDPSNTPAEDRADSG) form a disordered region. Ser-200 and Ser-204 each carry phosphoserine. Positions 207–217 (RSLTRSSTYTK) are enriched in polar residues. Thr-214 carries the post-translational modification Phosphothreonine. A Phosphoserine modification is found at Ser-219. Thr-235 is modified (phosphothreonine). A helical membrane pass occupies residues 437 to 456 (YIVDLLAVVVPAVPTVAWLC).

As to quaternary structure, binds to STX1A. Interacts with DNM1; this interaction inhibits the binding of DNM1 to AMPH and DNM1-receptor-mediated endocytosis.

The protein localises to the membrane. It is found in the synapse. It localises to the synaptosome. In terms of biological role, inhibits SNARE complex formation by absorbing free STX1A. This chain is Syntaphilin, found in Rattus norvegicus (Rat).